The chain runs to 379 residues: L-demethylnoviosyl transferase (379 aa).

This sequence belongs to the glycosyltransferase 28 family.

It catalyses the reaction dTDP-4-O-demethyl-beta-L-noviose + novobiocic acid = desmethyldescarbamoylnovobiocin + dTDP + H(+). It participates in antibiotic biosynthesis; novobiocin biosynthesis. Inhibited by TDP-L-rhamnose, the sugar donor that most closely structurally resembles the natural substrate dTDP-beta-L-noviose. Functionally, catalyzes the transfer of L-noviose from dTDP-4-O-demethyl-beta-L-noviose to the phenolic oxygen of novobiocic acid, creating the full ABC ring system in the novobiocin biosynthesis pathway. Novobiocin is an aminocoumarin family antibiotic that targets bacterial DNA gyrases. Also shows activity with variant coumarin aglycones, suggesting it may be a promiscuous catalyst for noviosylation of a range of planar scaffolds. Does not show activity with TDP-L-rhamnose. In Streptomyces niveus (Streptomyces spheroides), this protein is L-demethylnoviosyl transferase (novM).